A 510-amino-acid chain; its full sequence is NAD(P)H-quinone oxidoreductase subunit 2 B, chloroplastic (510 aa).

The next 13 membrane-spanning stretches (helical) occupy residues 24–44, 57–77, 99–119, 124–144, 149–169, 183–203, 227–247, 295–315, 323–343, 354–374, 395–415, 418–438, and 484–504; these read LLLFDGSLIFPECILIFGLIL, IPWLYFISSTSLVMSITALLF, IFQFLILLCSTLCIPLSVEYI, MAITEFLLFILTATIGGMFLC, LITIFVAPECFSLCSYLLSGY, YLLMGGASSSILVHGFSWLYG, PGISIALIFITVGIGFKLSPA, WHLLLEILAILSMILGNLIAI, MLAYSSIGQIGYVIIGIIVGD, YMLFYISMNLGTFACIVLFGL, ALSLALCLLSLGGLPPLAGFF, LYLFWCGWQAGLYLLVLIGLL, and MIVCVIASTIPGISMNPIIAI.

It belongs to the complex I subunit 2 family. As to quaternary structure, NDH is composed of at least 16 different subunits, 5 of which are encoded in the nucleus.

It localises to the plastid. Its subcellular location is the chloroplast thylakoid membrane. The catalysed reaction is a plastoquinone + NADH + (n+1) H(+)(in) = a plastoquinol + NAD(+) + n H(+)(out). The enzyme catalyses a plastoquinone + NADPH + (n+1) H(+)(in) = a plastoquinol + NADP(+) + n H(+)(out). In terms of biological role, NDH shuttles electrons from NAD(P)H:plastoquinone, via FMN and iron-sulfur (Fe-S) centers, to quinones in the photosynthetic chain and possibly in a chloroplast respiratory chain. The immediate electron acceptor for the enzyme in this species is believed to be plastoquinone. Couples the redox reaction to proton translocation, and thus conserves the redox energy in a proton gradient. The sequence is that of NAD(P)H-quinone oxidoreductase subunit 2 B, chloroplastic from Helianthus annuus (Common sunflower).